Consider the following 106-residue polypeptide: uncharacterized protein (106 aa).

Positions 1–25 (MSVIKKNIPAIGLCICAFFIHSAVG) are cleaved as a signal peptide.

It to the N-terminal of the FimA/PapA family of fimbria proteins.

This is an uncharacterized protein from Salmonella typhi.